The primary structure comprises 349 residues: Transmembrane protein 255A (349 aa).

4 helical membrane passes run Ile30–Ala50, Val57–Ile77, Leu89–Val109, and Thr226–Phe246. Residues Pro303 to Ala329 are disordered. Over residues Ser316–Ala329 the composition is skewed to low complexity.

Belongs to the TMEM255 family.

It is found in the membrane. The sequence is that of Transmembrane protein 255A (TMEM255A) from Homo sapiens (Human).